A 416-amino-acid chain; its full sequence is Gamma-glutamyl phosphate reductase (416 aa).

The protein belongs to the gamma-glutamyl phosphate reductase family.

The protein resides in the cytoplasm. The enzyme catalyses L-glutamate 5-semialdehyde + phosphate + NADP(+) = L-glutamyl 5-phosphate + NADPH + H(+). It participates in amino-acid biosynthesis; L-proline biosynthesis; L-glutamate 5-semialdehyde from L-glutamate: step 2/2. Catalyzes the NADPH-dependent reduction of L-glutamate 5-phosphate into L-glutamate 5-semialdehyde and phosphate. The product spontaneously undergoes cyclization to form 1-pyrroline-5-carboxylate. The sequence is that of Gamma-glutamyl phosphate reductase from Streptococcus pyogenes serotype M4 (strain MGAS10750).